Here is a 978-residue protein sequence, read N- to C-terminus: Copper-transporting ATPase HMA4 (978 aa).

Over residues 1-11 the composition is skewed to basic and acidic residues; it reads MEQNGENHLKD. The disordered stretch occupies residues 1-35; the sequence is MEQNGENHLKDPLLQADGGGSGASPAGASPRKERK. 3 consecutive HMA domains span residues 37-103, 111-177, and 186-252; these read RKVM…FEVD, AVCR…FGAD, and NKVH…QPPK. Cu(+) contacts are provided by cysteine 48, cysteine 51, cysteine 122, and cysteine 125. The next 8 membrane-spanning stretches (helical) occupy residues 280-300, 315-335, 352-372, 385-405, 545-565, 584-604, 907-927, and 935-955; these read FLWS…LPMI, MTIG…IIGW, MDVL…YIVL, FFET…LEVV, FFVP…FVAG, LALQ…LGLA, VWAL…LFPF, and WLAG…SLLL.

Belongs to the cation transport ATPase (P-type) (TC 3.A.3) family. Type IB subfamily. As to expression, highly expressed in roots. Expressed in vascular tissues of the stele, mainly in pericycle cells.

It localises to the vacuole membrane. The catalysed reaction is Cu(+)(in) + ATP + H2O = Cu(+)(out) + ADP + phosphate + H(+). Functionally, copper (Cu) transporter that mediates Cu transport in root vacuoles. Involved in Cu detoxification by sequestrating Cu into root vacuoles and limiting translocation of Cu from the roots to the shoots, and accumulation in grains. This chain is Copper-transporting ATPase HMA4, found in Oryza sativa subsp. japonica (Rice).